Reading from the N-terminus, the 290-residue chain is Acetylglutamate kinase (290 aa).

Residues 65-66, Arg-87, and Asn-186 contribute to the substrate site; that span reads GG.

This sequence belongs to the acetylglutamate kinase family. ArgB subfamily.

The protein localises to the cytoplasm. The catalysed reaction is N-acetyl-L-glutamate + ATP = N-acetyl-L-glutamyl 5-phosphate + ADP. The protein operates within amino-acid biosynthesis; L-arginine biosynthesis; N(2)-acetyl-L-ornithine from L-glutamate: step 2/4. In terms of biological role, catalyzes the ATP-dependent phosphorylation of N-acetyl-L-glutamate. This Mycobacterium sp. (strain JLS) protein is Acetylglutamate kinase.